The chain runs to 1852 residues: Voltage-dependent L-type calcium channel subunit alpha-1S (1852 aa).

Residues 1 to 23 form a disordered region; that stretch reads MEPPSPQDEGLRKKQPKKPVPEI. Topologically, residues 1-51 are cytoplasmic; the sequence is MEPPSPQDEGLRKKQPKKPVPEILPRPPRALFCLTLQNPLRKACISIVEWK. An I repeat occupies 38 to 337; the sequence is NPLRKACISI…LVLGVLSGEF (300 aa). Residues 52–70 traverse the membrane as a helical segment; it reads PFETIILLTIFANCVALAV. Residues 71–85 lie on the Extracellular side of the membrane; that stretch reads YLPMPEDDNNTLNLG. N79 carries an N-linked (GlcNAc...) asparagine glycan. The helical transmembrane segment at 86 to 106 threads the bilayer; it reads LEKLEYFFLIVFSIEAAMKII. Residues 107–115 are Cytoplasmic-facing; the sequence is AYGFLFHQD. Residues 116 to 136 form a helical membrane-spanning segment; it reads AYLRSGWNVLDFIIVFLGVFT. The Extracellular segment spans residues 137-160; that stretch reads VILEQVNIIQTNTAPMSSKGAGLD. The chain crosses the membrane as a helical span at residues 161-179; sequence VKALRAFRVLRPLRLVSGV. At 180-196 the chain is on the cytoplasmic side; sequence PSLQVVLNSIFKAMLPL. A helical membrane pass occupies residues 197 to 218; that stretch reads FHIALLVLFMVIIYAIIGLELF. The Extracellular portion of the chain corresponds to 219–279; the sequence is KGKMHKTCYF…HGITHFDNFG (61 aa). Intrachain disulfides connect C226–C254 and C245–C261. Residue N257 is glycosylated (N-linked (GlcNAc...) asparagine). Residues 280-301 constitute an intramembrane region (pore-forming); sequence FSMLTVYQCISMEGWTDVLYWV. Residues 290–293 carry the Selectivity filter of repeat I motif; that stretch reads SMEG. E292 is a binding site for Ca(2+). Residues 302-309 are Extracellular-facing; that stretch reads NDAIGNEW. A helical transmembrane segment spans residues 310–330; sequence PWIYFVTLILLGSFFILNLVL. At 331 to 432 the chain is on the cytoplasmic side; the sequence is GVLSGEFTKE…WKCHDLVKSK (102 aa). The tract at residues 357 to 374 is binding to the beta subunit; that stretch reads QQLEEDLRGYMSWITQGE. Phosphoserine occurs at positions 393 and 397. The II repeat unit spans residues 418–664; it reads NRVFRWKCHD…VFLAIAVDNL (247 aa). A helical membrane pass occupies residues 433-451; that stretch reads VFYWLVILIVALNTLSIAS. Over 452-462 the chain is Extracellular; the sequence is EHHNQPLWLTH. Residues 463–483 traverse the membrane as a helical segment; sequence LQDVANRVLLTLFTIEMLMKM. Residues 484 to 494 are Cytoplasmic-facing; that stretch reads YGLGLRQYFMS. Residues 495–514 form a helical membrane-spanning segment; sequence IFNRFDCFVVCSGILEILLV. Residues 515–523 lie on the Extracellular side of the membrane; it reads ESGAMSPLG. A helical membrane pass occupies residues 524–542; that stretch reads ISVLRCIRLLRLFKITKYW. Residues 543 to 561 are Cytoplasmic-facing; sequence TSLSNLVASLLNSIRSIAS. Residues 562–581 traverse the membrane as a helical segment; that stretch reads LLLLLFLFIIIFALLGMQLF. Over 582-601 the chain is Extracellular; the sequence is GGRYDFEDTEVRRSNFDNFP. The pore-forming intramembrane region spans 602-623; the sequence is QALISVFQVLTGEDWNSVMYNG. The Selectivity filter of repeat II signature appears at 612–615; that stretch reads TGED. Residue E614 participates in Ca(2+) binding. Residues 624-633 lie on the Extracellular side of the membrane; it reads IMAYGGPTYP. The chain crosses the membrane as a helical span at residues 634-653; it reads GVLVCIYFIILFVCGNYILL. The Cytoplasmic segment spans residues 654–799; that stretch reads NVFLAIAVDN…VLCHRIVNAT (146 aa). 2 disordered regions span residues 675 to 712 and 731 to 757; these read KAKA…SKGE and EVKD…VSPR. S687 carries the phosphoserine; by PKA modification. The span at 690–711 shows a compositional bias: basic and acidic residues; the sequence is LPDKSEEERATVTKKLEQKSKG. A compositionally biased stretch (acidic residues) spans 742-751; sequence PGDDEEDEPE. Residues 768 to 1068 form an III repeat; it reads EKAVPIPEAS…IFVGFVIVTF (301 aa). Residues 800-818 form a helical membrane-spanning segment; that stretch reads WFTNFILLFILLSSAALAA. Over 819–830 the chain is Extracellular; it reads EDPIRADSMRNQ. A helical membrane pass occupies residues 831–850; it reads ILEYFDYVFTAVFTVEIVLK. At 851 to 866 the chain is on the cytoplasmic side; that stretch reads MTTYGAFLHKGSFCRN. Residues 867–885 form a helical membrane-spanning segment; that stretch reads YFNILDLLVVAVSLISMGL. The Extracellular portion of the chain corresponds to 886 to 892; sequence ESSAISV. The helical transmembrane segment at 893-911 threads the bilayer; that stretch reads VKILRVLRVLRPLRAINRA. Topologically, residues 912–930 are cytoplasmic; sequence KGLKHVVQCVFVAIRTIGN. The chain crosses the membrane as a helical span at residues 931–950; the sequence is IVLVTTLLQFMFACIGVQLF. The Extracellular portion of the chain corresponds to 951-1000; the sequence is KGKFYSCNDLSKMTEEECRGYYYIYKDGDPTQIELRPRQWIHNDFHFDNV. C957 and C968 form a disulfide bridge. The dihydropyridine binding stretch occupies residues 988–1077; that stretch reads RQWIHNDFHF…FQEQGETEYK (90 aa). Residues 1001–1021 constitute an intramembrane region (pore-forming); the sequence is LSAMMSLFTVSTFEGWPQLLY. Positions 1012–1015 match the Selectivity filter of repeat III motif; sequence TFEG. E1014 is a Ca(2+) binding site. The Extracellular portion of the chain corresponds to 1022–1038; it reads KAIDSNEEDTGPVYNNR. A helical membrane pass occupies residues 1039-1060; the sequence is VEMAIFFIIYIILIAFFMMNIF. Residues 1061–1118 lie on the Cytoplasmic side of the membrane; the sequence is VGFVIVTFQEQGETEYKNCELDKNQRQCVQYALKARPLRCYIPKNPYQYQVWYVVTSS. The IV repeat unit spans residues 1105-1384; that stretch reads NPYQYQVWYV…LFVAVIMDNF (280 aa). The helical transmembrane segment at 1119 to 1140 threads the bilayer; the sequence is YFEYLMFALIMLNTICLGMQHY. An N-linked (GlcNAc...) asparagine glycan is attached at N1141. Over 1141 to 1148 the chain is Extracellular; the sequence is NQSEQMNH. The chain crosses the membrane as a helical span at residues 1149–1170; sequence ISDILNVAFTIIFTLEMVLKLI. Residues 1171–1180 lie on the Cytoplasmic side of the membrane; that stretch reads AFKPRGYFGD. The chain crosses the membrane as a helical span at residues 1181–1200; sequence PWNVFDFLIVIGSIIDVILS. The Extracellular segment spans residues 1201–1231; that stretch reads EIDTFLASSGGLYCLGGGCGNVDPDESARIS. Residues 1232 to 1250 traverse the membrane as a helical segment; it reads SAFFRLFRVMRLVKLLNRA. Topologically, residues 1251–1268 are cytoplasmic; the sequence is EGVRTLLWTFIKSFQALP. The chain crosses the membrane as a helical span at residues 1269-1289; sequence YVALLIVMLFFIYAVIGMQMF. Topologically, residues 1290-1311 are extracellular; that stretch reads GKIAMVDGTQINRNNNFQTFPQ. The segment at residues 1312–1330 is an intramembrane region (pore-forming); the sequence is AVLLLFRCATGEAWQEILL. Residues 1321-1324 carry the Selectivity filter of repeat IV motif; sequence TGEA. The Extracellular segment spans residues 1331–1356; that stretch reads ACSYGKLCDPESDYAPGEEHTCGTNF. Residues 1337 to 1403 form a dihydropyridine binding region; sequence LCDPESDYAP…LGPHHLDEFK (67 aa). Residues C1338 and C1352 are joined by a disulfide bond. Phenylalkylamine binding stretches follow at residues 1349–1391 and 1349–1392; these read EHTC…TRDW and EHTC…RDWS. The chain crosses the membrane as a helical span at residues 1357-1381; the sequence is AYYYFISFYMLCAFLIINLFVAVIM. The Cytoplasmic segment spans residues 1382 to 1852; sequence DNFDYLTRDW…PEGGAVPWEP (471 aa). The interval 1522 to 1542 is interaction with calmodulin; it reads KFYATFLIQEHFRKFMKRQEE. S1575 bears the Phosphoserine; by PKA and CAMK2 mark. The residue at position 1579 (T1579) is a Phosphothreonine. S1617 carries the phosphoserine; by PKA modification. 2 disordered regions span residues 1702 to 1721 and 1727 to 1762; these read GPLS…HVDK and TQRG…PTSR. Positions 1747–1757 are enriched in basic and acidic residues; it reads KAEHPVQKEGK.

It belongs to the calcium channel alpha-1 subunit (TC 1.A.1.11) family. CACNA1S subfamily. Component of a calcium channel complex consisting of a pore-forming alpha subunit (CACNA1S) and the ancillary subunits CACNB1 or CACNB2, CACNG1 and CACNA2D1. The channel complex contains alpha, beta, gamma and delta subunits in a 1:1:1:1 ratio, i.e. it contains either CACNB1 or CACNB2. CACNA1S channel activity is modulated by the auxiliary subunits (CACNB1 or CACNB2, CACNG1 and CACNA2D1). Interacts with DYSF and JSRP1. Interacts with RYR1. Interacts with STAC, STAC2 and STAC3 (via their SH3 domains). Interacts with CALM. Post-translationally, the alpha-1S subunit is found in two isoforms in the skeletal muscle: a minor form of 212 kDa containing the complete amino acid sequence, and a major form of 190 kDa derived from the full-length form by post-translational proteolysis close to Phe-1690. In terms of processing, phosphorylated. Phosphorylation by PKA activates the calcium channel. Both the minor and major forms are phosphorylated in vitro by PKA. Phosphorylation at Ser-1575 is involved in beta-adrenergic-mediated regulation of the channel.

The protein localises to the cell membrane. It is found in the sarcolemma. It localises to the T-tubule. The enzyme catalyses Ca(2+)(in) = Ca(2+)(out). Its activity is regulated as follows. Channel activity is blocked by dihydropyridines (DHP), phenylalkylamines, and by benzothiazepines. In terms of biological role, pore-forming, alpha-1S subunit of the voltage-gated calcium channel that gives rise to L-type calcium currents in skeletal muscle. Calcium channels containing the alpha-1S subunit play an important role in excitation-contraction coupling in skeletal muscle via their interaction with RYR1, which triggers Ca(2+) release from the sarcplasmic reticulum and ultimately results in muscle contraction. Long-lasting (L-type) calcium channels belong to the 'high-voltage activated' (HVA) group. In Mus musculus (Mouse), this protein is Voltage-dependent L-type calcium channel subunit alpha-1S (Cacna1s).